The following is a 368-amino-acid chain: H-2 class I histocompatibility antigen, K-W28 alpha chain (368 aa).

The signal sequence occupies residues 1-21 (MAPCMLLLLLAAALAPTQTRA). The interval 22–111 (GPHSLRYFHT…LLRYYNQSAG (90 aa)) is alpha-1. The Extracellular segment spans residues 22 to 305 (GPHSLRYFHT…EPPPSAVSNT (284 aa)). The N-linked (GlcNAc...) asparagine glycan is linked to N107. The alpha-2 stretch occupies residues 112 to 203 (GSHTIQRMYG…KNGNATLLRT (92 aa)). Residues C122 and C185 are joined by a disulfide bond. N197 carries N-linked (GlcNAc...) asparagine glycosylation. The interval 204–295 (DSPKAHVTHH…GLPKPLTLRW (92 aa)) is alpha-3. Positions 206-292 (PKAHVTHHSR…YHQGLPKPLT (87 aa)) constitute an Ig-like C1-type domain. The cysteines at positions 224 and 280 are disulfide-linked. The connecting peptide stretch occupies residues 296-305 (EPPPSAVSNT). A helical membrane pass occupies residues 306-329 (VIIAVLVVLGAAIVTGAVVAFVMM). The Cytoplasmic segment spans residues 330–368 (RRRNTGGKGGDYALAPGSQTSDLSLPDCKVMVHDPHSLA). 2 positions are modified to phosphoserine: S350 and S353.

Belongs to the MHC class I family. Heterodimer of an alpha chain and a beta chain (beta-2-microglobulin).

It localises to the membrane. In terms of biological role, involved in the presentation of foreign antigens to the immune system. This Mus musculus (Mouse) protein is H-2 class I histocompatibility antigen, K-W28 alpha chain (H2-K1).